A 61-amino-acid polypeptide reads, in one-letter code: Small ribosomal subunit protein uS14 (61 aa).

Zn(2+) is bound by residues Cys24, Cys27, Cys40, and Cys43.

It belongs to the universal ribosomal protein uS14 family. Zinc-binding uS14 subfamily. Part of the 30S ribosomal subunit. Contacts proteins S3 and S10. Zn(2+) serves as cofactor.

Functionally, binds 16S rRNA, required for the assembly of 30S particles and may also be responsible for determining the conformation of the 16S rRNA at the A site. This is Small ribosomal subunit protein uS14 from Roseiflexus sp. (strain RS-1).